The primary structure comprises 180 residues: MANSFATKYNEEIVPALTKKFNYTSSMQVPKIDKIVLNMGVGDAVANAKNLDEAVEELTLISGQKPMITKAKKSIANFRLREGMSIGAKVTLRGDRMYDFLSKLINVSLPRVRDFRGVSTRSFDGRGNYTLGVKEQLIFPEIDFDKVNRTRGLDIVIVTTAQTDEEARELLTQFGMPFAK.

This sequence belongs to the universal ribosomal protein uL5 family. As to quaternary structure, part of the 50S ribosomal subunit; part of the 5S rRNA/L5/L18/L25 subcomplex. Contacts the 5S rRNA and the P site tRNA. Forms a bridge to the 30S subunit in the 70S ribosome.

Its function is as follows. This is one of the proteins that bind and probably mediate the attachment of the 5S RNA into the large ribosomal subunit, where it forms part of the central protuberance. In the 70S ribosome it contacts protein S13 of the 30S subunit (bridge B1b), connecting the 2 subunits; this bridge is implicated in subunit movement. Contacts the P site tRNA; the 5S rRNA and some of its associated proteins might help stabilize positioning of ribosome-bound tRNAs. This is Large ribosomal subunit protein uL5 from Lactobacillus delbrueckii subsp. bulgaricus (strain ATCC 11842 / DSM 20081 / BCRC 10696 / JCM 1002 / NBRC 13953 / NCIMB 11778 / NCTC 12712 / WDCM 00102 / Lb 14).